Consider the following 120-residue polypeptide: uncharacterized protein (120 aa).

This is an uncharacterized protein from Allochromatium vinosum (strain ATCC 17899 / DSM 180 / NBRC 103801 / NCIMB 10441 / D) (Chromatium vinosum).